Reading from the N-terminus, the 372-residue chain is Alpha-L-fucosidase 3 (372 aa).

The signal sequence occupies residues 1–23 (MNPILSSLFALSLLSSLSPSTHA). Ser-37 functions as the Nucleophile in the catalytic mechanism. Residues Asn-96, Asn-114, Asn-139, and Asn-182 are each glycosylated (N-linked (GlcNAc...) asparagine). Active-site residues include Asp-345 and His-348.

This sequence belongs to the 'GDSL' lipolytic enzyme family. High expression in younger leaves and in the apical region of the inflorescence stem.

The protein localises to the secreted. The protein resides in the extracellular space. It is found in the apoplast. The enzyme catalyses an alpha-L-fucoside + H2O = L-fucose + an alcohol. Functionally, hydrolyzes alpha-1,2-linked fucose. Also active on fucosylated xyloglucan oligosaccharides. The chain is Alpha-L-fucosidase 3 (FXG1) from Arabidopsis thaliana (Mouse-ear cress).